We begin with the raw amino-acid sequence, 520 residues long: Amine oxidase [flavin-containing] B (520 aa).

An N-acetylserine modification is found at serine 2. The Cytoplasmic segment spans residues 2-489 (SNKCDVIVVG…TFLERHLPSV (488 aa)). Lysine 52 bears the N6-acetyllysine mark. Cysteine 397 carries the S-8alpha-FAD cysteine modification. The helical; Anchor for type IV membrane protein transmembrane segment at 490–516 (PGLLKLLGLTTILSATALGFLAHKKGL) threads the bilayer. At 517–520 (FVRF) the chain is on the mitochondrial intermembrane side.

This sequence belongs to the flavin monoamine oxidase family. Monomer, homo- or heterodimer (containing two subunits of similar size). Each subunit contains a covalently bound flavin. Enzymatically active as monomer. The cofactor is FAD.

It localises to the mitochondrion outer membrane. It carries out the reaction a secondary aliphatic amine + O2 + H2O = a primary amine + an aldehyde + H2O2. The enzyme catalyses (R)-adrenaline + O2 + H2O = (R)-3,4-dihydroxymandelaldehyde + methylamine + H2O2. The catalysed reaction is a primary methyl amine + O2 + H2O = an aldehyde + H2O2 + NH4(+). It catalyses the reaction dopamine + O2 + H2O = 3,4-dihydroxyphenylacetaldehyde + H2O2 + NH4(+). It carries out the reaction tyramine + O2 + H2O = (4-hydroxyphenyl)acetaldehyde + H2O2 + NH4(+). The enzyme catalyses (R)-noradrenaline + O2 + H2O = (R)-3,4-dihydroxymandelaldehyde + H2O2 + NH4(+). The catalysed reaction is benzylamine + O2 + H2O = benzaldehyde + H2O2 + NH4(+). It catalyses the reaction 2-phenylethylamine + O2 + H2O = 2-phenylacetaldehyde + H2O2 + NH4(+). It carries out the reaction N-acetylputrescine + O2 + H2O = 4-acetamidobutanal + H2O2 + NH4(+). Functionally, catalyzes the oxidative deamination of primary and some secondary amines such as neurotransmitters, and exogenous amines including the tertiary amine, neurotoxin 1-methyl-4-phenyl-1,2,3,6-tetrahydropyridine (MPTP), with concomitant reduction of oxygen to hydrogen peroxide and participates in the metabolism of neuroactive and vasoactive amines in the central nervous system and peripheral tissues. Preferentially degrades benzylamine and phenylethylamine. The polypeptide is Amine oxidase [flavin-containing] B (Rattus norvegicus (Rat)).